The chain runs to 270 residues: MNERPILFFDSGIGGLTVLREVRVLIPETQFIYVADDAGFPYGNWEENVLKNHILKVFTNLLTLYNPTLCVVACNTVSTLMMADLRKEFPHTLFVGTVPAIKLAAKQTKSGFISVLATPGTVKRAYTRELINSFAGQCHVQLVGSEKLAAFAEDYLRGKPIDLEELRNEILPCFFEQNGKYTDTIVLACTHYPFLINLFREQALWPVKWIDPAKAIAKHIRSLLPERMYHKNTKKLKDFALFTSQNITSSTKHLLKEFGLNITKGVDFEM.

Residues 10 to 11 and 42 to 43 each bind substrate; these read DS and YG. Catalysis depends on Cys-74, which acts as the Proton donor/acceptor. A substrate-binding site is contributed by 75–76; that stretch reads NT. Cys-189 serves as the catalytic Proton donor/acceptor. 190–191 provides a ligand contact to substrate; the sequence is TH.

Belongs to the aspartate/glutamate racemases family.

It carries out the reaction L-glutamate = D-glutamate. The protein operates within cell wall biogenesis; peptidoglycan biosynthesis. Functionally, provides the (R)-glutamate required for cell wall biosynthesis. This Bartonella quintana (strain Toulouse) (Rochalimaea quintana) protein is Glutamate racemase.